A 308-amino-acid polypeptide reads, in one-letter code: Homogentisate phytyltransferase (308 aa).

8 consecutive transmembrane segments (helical) span residues 13-33 (PHTI…TILG), 44-64 (LDLV…IVGL), 104-124 (LAIA…SLII), 142-162 (AALC…FLFF), 173-193 (ITPI…IAIF), 219-241 (VFRG…GLWA), 245-263 (LNTA…LLWW), and 279-299 (FYQF…LALW).

Belongs to the UbiA prenyltransferase family.

It localises to the membrane. It catalyses the reaction phytyl diphosphate + homogentisate + H(+) = 2-methyl-6-phytyl-1,4-benzene-1,4-diol + CO2 + diphosphate. It participates in cofactor biosynthesis; tocopherol biosynthesis. In terms of biological role, involved in the synthesis of tocopherol (vitamin E). Catalyzes the condensation of homogentisate and phytyl diphosphate to form dimethylphytylhydrquinone. This Synechocystis sp. (strain ATCC 27184 / PCC 6803 / Kazusa) protein is Homogentisate phytyltransferase.